The primary structure comprises 1373 residues: DNA-directed RNA polymerase subunit beta'' (1373 aa).

Residues Cys-224, Cys-296, Cys-303, and Cys-306 each contribute to the Zn(2+) site.

The protein belongs to the RNA polymerase beta' chain family. RpoC2 subfamily. In plastids the minimal PEP RNA polymerase catalytic core is composed of four subunits: alpha, beta, beta', and beta''. When a (nuclear-encoded) sigma factor is associated with the core the holoenzyme is formed, which can initiate transcription. The cofactor is Zn(2+).

It localises to the plastid. It is found in the chloroplast. It carries out the reaction RNA(n) + a ribonucleoside 5'-triphosphate = RNA(n+1) + diphosphate. Its function is as follows. DNA-dependent RNA polymerase catalyzes the transcription of DNA into RNA using the four ribonucleoside triphosphates as substrates. This is DNA-directed RNA polymerase subunit beta'' from Amborella trichopoda.